The chain runs to 174 residues: Repair DNA polymerase X (174 aa).

The involved in ssDNA binding stretch occupies residues 42 to 51; sequence REEKMLNDVD. Mg(2+)-binding residues include D49 and D51. C81 and C86 form a disulfide bridge. Position 100 (D100) interacts with Mg(2+).

The protein belongs to the DNA polymerase type-X family. Mg(2+) serves as cofactor.

It localises to the virion. It catalyses the reaction DNA(n) + a 2'-deoxyribonucleoside 5'-triphosphate = DNA(n+1) + diphosphate. In terms of biological role, error-prone polymerase lacking a proofreading 3'-5' exonuclease which catalyzes the gap-filling reaction during the DNA repair process. Specifically binds intermediates in the single-nucleotide base-excision repair process. Also catalyzes DNA polymerization with low nucleotide-insertion fidelity. Probably acts as a strategic DNA mutase, which gives rise to a rapid emergence of variants. Generates mismatched G-G pairs, in that case, the polymerase first binds the deoxynucleotide followed by mismatch formation. Together with the viral DNA ligase, fills the single nucleotide gaps generated by the AP endonuclease. Binds DNA with high affinity via the helix alphaE. The protein is Repair DNA polymerase X of African swine fever virus (isolate Tick/South Africa/Pretoriuskop Pr4/1996) (ASFV).